The chain runs to 587 residues: 5-aminolevulinate synthase, erythroid-specific, mitochondrial (587 aa).

The N-terminal 49 residues, Met1–Ser49, are a transit peptide targeting the mitochondrion. Succinyl-CoA is bound at residue Arg163. Positions 258 and 259 each coordinate pyridoxal 5'-phosphate. Positions 280 and 299 each coordinate succinyl-CoA. 3 residues coordinate pyridoxal 5'-phosphate: Ser332, His360, and Thr388. Residue Lys391 is part of the active site. Lys391 carries the post-translational modification N6-(pyridoxal phosphate)lysine. Pyridoxal 5'-phosphate is bound by residues Thr420 and Thr421. A succinyl-CoA-binding site is contributed by Thr508.

The protein belongs to the class-II pyridoxal-phosphate-dependent aminotransferase family. As to quaternary structure, homodimer. Interacts with SUCLA2. The cofactor is pyridoxal 5'-phosphate. Predomnantly expressed in erythroid cells.

The protein localises to the mitochondrion inner membrane. Its subcellular location is the mitochondrion. It catalyses the reaction succinyl-CoA + glycine + H(+) = 5-aminolevulinate + CO2 + CoA. It functions in the pathway porphyrin-containing compound metabolism; protoporphyrin-IX biosynthesis; 5-aminolevulinate from glycine: step 1/1. Its function is as follows. Catalyzes the pyridoxal 5'-phosphate (PLP)-dependent condensation of succinyl-CoA and glycine to form aminolevulinic acid (ALA), with CoA and CO2 as by-products. Contributes significantly to heme formation during erythropoiesis. The polypeptide is 5-aminolevulinate synthase, erythroid-specific, mitochondrial (Alas2) (Mus musculus (Mouse)).